The primary structure comprises 215 residues: Kinetochore protein Spc25 (215 aa).

Residues 43 to 114 (DNLLTAMEKA…MECIHALKRA (72 aa)) are a coiled coil.

Belongs to the SPC25 family. As to quaternary structure, component of the Ndc80 complex, which is composed of Ndc80, Nuf2 and Spc25.

It is found in the nucleus. The protein localises to the chromosome. The protein resides in the centromere. It localises to the kinetochore. Its function is as follows. Acts as a component of the essential kinetochore-associated Ndc80 complex, which is required for chromosome segregation and spindle checkpoint activity during meiosis and mitosis. Required for kinetochore integrity and the organization of stable microtubule binding sites in the outer plate of the kinetochore. Participates in SAC signaling that responds specifically to disruptions in spindle microtubule dynamics. The NDC80 complex synergistically enhances the affinity of the SKA1 complex for microtubules and may allow the NDC80 complex to track depolymerizing microtubules. This chain is Kinetochore protein Spc25, found in Drosophila ananassae (Fruit fly).